We begin with the raw amino-acid sequence, 452 residues long: Envelope glycoprotein D (452 aa).

The N-terminal stretch at 1–19 (MPAVLLVLYVNPPPSVCIL) is a signal peptide. Over 20-405 (TQKLSLGLYN…NSTFVGISVG (386 aa)) the chain is Virion surface. 2 N-linked (GlcNAc...) asparagine; by host glycosylation sites follow: N103 and N111. Disulfide bonds link C138–C259, C176–C273, and C188–C197. The interval 331 to 365 (PDNHPGFDSVESEITQNKTDPKPGQADPKPNQPFK) is disordered. 2 N-linked (GlcNAc...) asparagine; by host glycosylation sites follow: N347 and N396. A helical transmembrane segment spans residues 406 to 422 (LGIAGLVLVGVILYVCL). The Intravirion segment spans residues 423–452 (RRKKELKKSAQNGLTRLRSTFKDVKYTQLP).

The protein belongs to the herpesviridae glycoprotein D family.

It localises to the virion membrane. In terms of biological role, envelope glycoprotein that binds to host cell entry receptors, promoting the virus entry into host cells. May trigger fusion with host membrane, by recruiting the fusion machinery composed of gB and gH/gL. This Equine herpesvirus 1 (strain Ab4p) (EHV-1) protein is Envelope glycoprotein D (gD).